Reading from the N-terminus, the 530-residue chain is Cytochrome P450 monooxygenase aneG (530 aa).

N2 carries an N-linked (GlcNAc...) asparagine glycan. A helical transmembrane segment spans residues 43 to 63 (WLSILGFTIGCYYVIYTFYAL). N-linked (GlcNAc...) asparagine glycosylation occurs at N92. C474 serves as a coordination point for heme.

The protein belongs to the cytochrome P450 family. It depends on heme as a cofactor.

The protein localises to the membrane. It catalyses the reaction asperaculane E + reduced [NADPH--hemoprotein reductase] + O2 = asperaculane G + oxidized [NADPH--hemoprotein reductase] + H2O + H(+). The catalysed reaction is asperaculane G + reduced [NADPH--hemoprotein reductase] + O2 = aculene D + oxidized [NADPH--hemoprotein reductase] + CO2 + 2 H2O. The enzyme catalyses asperaculane E + 2 reduced [NADPH--hemoprotein reductase] + 2 O2 = aculene D + 2 oxidized [NADPH--hemoprotein reductase] + CO2 + 3 H2O + H(+). The protein operates within secondary metabolite biosynthesis. Cytochrome P450 monooxygenase; part of the gene cluster that mediates the biosynthesis of aculenes, a unique type of norsesquiterpenes that contain a nordaucane skeleton linked to an L-proline moiety and are of mixed biosynthetic origin. The pathway begins with the synthesis of dauca-4,7-diene by the terpene cyclase aneC using farnesyl pyrophosphate (FPP) as substrate. The cytochrome P450 monooxygenase aneF then performs the initial oxidation at C-12 of dauca-4,7-diene to yield asperaculane D. Asperaculane D is substrate of the cytochrome P450 monooxygenase aneD for C-10 hydroxylation to yield asperaculane E. The cytochrome P450 monooxygenase aneG then converts asperaculane E into aculene D via C-2 oxidation. The monomodular nonribosomal peptide synthtase aneB adenylates L-proline and the thiohydrolase aneE transfers this activated L-proline derivative to aculenes D and C to produce respectively aculenes B and A. The dioxygenase aneA converts aculene D into aculene C, and aculene B into aculene A by introducing the 5,6-alkene moiety. Asperculanes A, B, C and F, as well as 14-prolyl asperculane C, might be shunt products of the pathway. In Aspergillus aculeatus (strain ATCC 16872 / CBS 172.66 / WB 5094), this protein is Cytochrome P450 monooxygenase aneG.